We begin with the raw amino-acid sequence, 337 residues long: ERI1 exoribonuclease 3 (337 aa).

Residues Phe-146–Met-320 enclose the Exonuclease domain. Residues Asp-150, Glu-152, and Asp-249 each contribute to the Mg(2+) site. Glu-152 functions as the Proton acceptor in the catalytic mechanism. Glu-152 is an AMP binding site. His-307 serves as the catalytic Proton acceptor. His-307 is a binding site for AMP. Residue Asp-312 participates in Mg(2+) binding.

Interacts with PRNP. The cofactor is Mg(2+).

The protein is ERI1 exoribonuclease 3 (ERI3) of Homo sapiens (Human).